The sequence spans 477 residues: Putative multidrug resistance protein MdtD (477 aa).

14 helical membrane-spanning segments follow: residues Leu-13–Ala-33, Ser-50–Ala-70, Val-73–Cys-93, Val-107–Ile-127, Phe-139–Val-159, Trp-166–Met-186, Phe-196–Asp-216, Gly-220–Ala-240, Leu-268–Phe-288, Val-291–Ser-311, Gly-326–Val-348, Gly-352–Ala-374, Leu-394–Ile-414, and Ala-432–Ala-452.

Belongs to the major facilitator superfamily. TCR/Tet family.

Its subcellular location is the cell inner membrane. The chain is Putative multidrug resistance protein MdtD from Serratia proteamaculans (strain 568).